The chain runs to 214 residues: Octanoyltransferase (214 aa).

The BPL/LPL catalytic domain maps to 32-207 (EDTLDEIWLV…NLLALLNHPP (176 aa)). Substrate is bound by residues 71-78 (RGGQVTYH), 138-140 (SLG), and 151-153 (GLA). Cys-169 (acyl-thioester intermediate) is an active-site residue.

Belongs to the LipB family.

Its subcellular location is the cytoplasm. It catalyses the reaction octanoyl-[ACP] + L-lysyl-[protein] = N(6)-octanoyl-L-lysyl-[protein] + holo-[ACP] + H(+). It functions in the pathway protein modification; protein lipoylation via endogenous pathway; protein N(6)-(lipoyl)lysine from octanoyl-[acyl-carrier-protein]: step 1/2. Its function is as follows. Catalyzes the transfer of endogenously produced octanoic acid from octanoyl-acyl-carrier-protein onto the lipoyl domains of lipoate-dependent enzymes. Lipoyl-ACP can also act as a substrate although octanoyl-ACP is likely to be the physiological substrate. In Klebsiella pneumoniae subsp. pneumoniae (strain ATCC 700721 / MGH 78578), this protein is Octanoyltransferase.